A 409-amino-acid chain; its full sequence is Peptidase T (409 aa).

His-78 is a Zn(2+) binding site. Residue Asp-80 is part of the active site. Residue Asp-140 coordinates Zn(2+). Glu-173 acts as the Proton acceptor in catalysis. Residues Glu-174, Asp-196, and His-379 each contribute to the Zn(2+) site.

The protein belongs to the peptidase M20B family. It depends on Zn(2+) as a cofactor.

The protein localises to the cytoplasm. It catalyses the reaction Release of the N-terminal residue from a tripeptide.. In terms of biological role, cleaves the N-terminal amino acid of tripeptides. The protein is Peptidase T of Salmonella paratyphi A (strain ATCC 9150 / SARB42).